The chain runs to 147 residues: Large ribosomal subunit protein uL11 (147 aa).

This sequence belongs to the universal ribosomal protein uL11 family. Part of the ribosomal stalk of the 50S ribosomal subunit. Interacts with L10 and the large rRNA to form the base of the stalk. L10 forms an elongated spine to which L12 dimers bind in a sequential fashion forming a multimeric L10(L12)X complex. One or more lysine residues are methylated.

In terms of biological role, forms part of the ribosomal stalk which helps the ribosome interact with GTP-bound translation factors. In Sorangium cellulosum (strain So ce56) (Polyangium cellulosum (strain So ce56)), this protein is Large ribosomal subunit protein uL11.